We begin with the raw amino-acid sequence, 431 residues long: Bone morphogenetic protein 7 (431 aa).

The signal sequence occupies residues 1-29 (MHVRSLRAAAPHSFVALWAPLFLLRSALA). Positions 30–292 (DFSLDNEVHS…ATEVHFRSIR (263 aa)) are excised as a propeptide. N-linked (GlcNAc...) asparagine glycosylation is found at asparagine 187, asparagine 302, asparagine 321, and asparagine 372. A disordered region spans residues 291 to 311 (IRSTGSKQRSQNRSKTPKNQE). 3 disulfide bridges follow: cysteine 330/cysteine 396, cysteine 359/cysteine 428, and cysteine 363/cysteine 430.

The protein belongs to the TGF-beta family. In terms of assembly, homodimer; disulfide-linked. Interacts with SOSTDC1. Interacts with TWSG1. Interacts with FBN1 (via N-terminal domain) and FBN2. Interacts with type I receptor ACVR1. Interacts with type II receptor ACVR2A. Interacts with NOG; this interaction inhibits canonical BMP signaling. Interacts with SCUBE3. Interacts with ERFE; the interaction inhibits BMP-induced transcription of HAMP. Interacts with TGFBR3. Several N-termini starting at positions 293, 300, 315 and 316 have been identified by direct sequencing resulting in secretion of different mature forms. As to expression, expressed in the kidney and bladder. Lower levels seen in the brain.

It is found in the secreted. Growth factor of the TGF-beta superfamily that plays important role in various biological processes, including embryogenesis, hematopoiesis, neurogenesis and skeletal morphogenesis. Initiates the canonical BMP signaling cascade by associating with type I receptor ACVR1 and type II receptor ACVR2A. Once all three components are bound together in a complex at the cell surface, ACVR2A phosphorylates and activates ACVR1. In turn, ACVR1 propagates signal by phosphorylating SMAD1/5/8 that travel to the nucleus and act as activators and repressors of transcription of target genes. For specific functions such as growth cone collapse in developing spinal neurons and chemotaxis of monocytes, also uses BMPR2 as type II receptor. Can also signal through non-canonical pathways such as P38 MAP kinase signaling cascade that promotes brown adipocyte differentiation through activation of target genes, including members of the SOX family of transcription factors. Promotes the expression of HAMP, this is repressed by its interaction with ERFE. This is Bone morphogenetic protein 7 (BMP7) from Homo sapiens (Human).